A 447-amino-acid chain; its full sequence is Tol-Pal system protein TolB (447 aa).

An N-terminal signal peptide occupies residues 1-34 (MSSRLPALPLSRRQALLGGAGSAAALLLPGGAQA). Residues 426–447 (RNEQKVPTPGFASDPAWSPLLS) form a disordered region.

It belongs to the TolB family. As to quaternary structure, the Tol-Pal system is composed of five core proteins: the inner membrane proteins TolA, TolQ and TolR, the periplasmic protein TolB and the outer membrane protein Pal. They form a network linking the inner and outer membranes and the peptidoglycan layer.

It localises to the periplasm. In terms of biological role, part of the Tol-Pal system, which plays a role in outer membrane invagination during cell division and is important for maintaining outer membrane integrity. In Rhodopseudomonas palustris (strain BisB18), this protein is Tol-Pal system protein TolB.